Here is a 259-residue protein sequence, read N- to C-terminus: Thiazole synthase (259 aa).

Catalysis depends on lysine 98, which acts as the Schiff-base intermediate with DXP. Residues glycine 159, 185-186 (AG), and 207-208 (NS) each bind 1-deoxy-D-xylulose 5-phosphate.

Belongs to the ThiG family. Homotetramer. Forms heterodimers with either ThiH or ThiS.

The protein localises to the cytoplasm. The catalysed reaction is [ThiS sulfur-carrier protein]-C-terminal-Gly-aminoethanethioate + 2-iminoacetate + 1-deoxy-D-xylulose 5-phosphate = [ThiS sulfur-carrier protein]-C-terminal Gly-Gly + 2-[(2R,5Z)-2-carboxy-4-methylthiazol-5(2H)-ylidene]ethyl phosphate + 2 H2O + H(+). Its pathway is cofactor biosynthesis; thiamine diphosphate biosynthesis. Its function is as follows. Catalyzes the rearrangement of 1-deoxy-D-xylulose 5-phosphate (DXP) to produce the thiazole phosphate moiety of thiamine. Sulfur is provided by the thiocarboxylate moiety of the carrier protein ThiS. In vitro, sulfur can be provided by H(2)S. The protein is Thiazole synthase of Chlorobium phaeobacteroides (strain BS1).